The sequence spans 364 residues: Monocarboxylate 2-oxoacid-binding periplasmic protein all3028 (364 aa).

Positions 1 to 26 (MKRREVLNTAAIATATTALVSCTQTN) are cleaved as a signal peptide. Residues 103–104 (YY), glutamine 160, and arginine 181 contribute to the substrate site. Glutamine 160 serves as a coordination point for Na(+). Residues glutamate 218, tryptophan 219, and glutamate 244 each coordinate Na(+).

Belongs to the bacterial solute-binding protein 7 family. As to quaternary structure, homodimer. The complex comprises the extracytoplasmic solute receptor protein all3028, and the two putative transmembrane proteins alr3026 and alr3027.

The protein localises to the periplasm. Pyruvate uptake inhibited by 2-oxobutyrate, 2-oxovalerate, 2-oxoisovalerate, 2-oxoisocaproate and 2-oxo-3-methylvalerate. In terms of biological role, part of the tripartite ATP-independent periplasmic (TRAP) transport system involved in the uptake of monocarboxylate 2-oxoacids. This protein specifically binds monocarboxylate 2-oxoacids including pyruvate, 2-oxobutyrate, 2-oxovalerate, 2-oxoisovalerate, 2-oxoisocaproate and 2-oxo-3-methylvalerate. Is not able to bind mannitol. The chain is Monocarboxylate 2-oxoacid-binding periplasmic protein all3028 from Nostoc sp. (strain PCC 7120 / SAG 25.82 / UTEX 2576).